We begin with the raw amino-acid sequence, 508 residues long: Photosystem II CP47 reaction center protein (508 aa).

A run of 6 helical transmembrane segments spans residues 21 to 36 (SVHI…WAGS), 101 to 115 (IVFS…IWHW), 140 to 156 (GIHL…FGAF), 203 to 218 (IAAG…FHLS), 237 to 252 (VLSS…AFVV), and 457 to 472 (SFAL…HGAR).

This sequence belongs to the PsbB/PsbC family. PsbB subfamily. As to quaternary structure, PSII is composed of 1 copy each of membrane proteins PsbA, PsbB, PsbC, PsbD, PsbE, PsbF, PsbH, PsbI, PsbJ, PsbK, PsbL, PsbM, PsbT, PsbX, PsbY, PsbZ, Psb30/Ycf12, at least 3 peripheral proteins of the oxygen-evolving complex and a large number of cofactors. It forms dimeric complexes. Binds multiple chlorophylls. PSII binds additional chlorophylls, carotenoids and specific lipids. is required as a cofactor.

Its subcellular location is the plastid. It localises to the chloroplast thylakoid membrane. Its function is as follows. One of the components of the core complex of photosystem II (PSII). It binds chlorophyll and helps catalyze the primary light-induced photochemical processes of PSII. PSII is a light-driven water:plastoquinone oxidoreductase, using light energy to abstract electrons from H(2)O, generating O(2) and a proton gradient subsequently used for ATP formation. This Gossypium barbadense (Sea Island cotton) protein is Photosystem II CP47 reaction center protein.